The following is a 357-amino-acid chain: UDP-N-acetylglucosamine--N-acetylmuramyl-(pentapeptide) pyrophosphoryl-undecaprenol N-acetylglucosamine transferase (357 aa).

Residues 15 to 17 (TGG), N124, R165, S191, and Q285 contribute to the UDP-N-acetyl-alpha-D-glucosamine site.

The protein belongs to the glycosyltransferase 28 family. MurG subfamily.

The protein localises to the cell inner membrane. It catalyses the reaction di-trans,octa-cis-undecaprenyl diphospho-N-acetyl-alpha-D-muramoyl-L-alanyl-D-glutamyl-meso-2,6-diaminopimeloyl-D-alanyl-D-alanine + UDP-N-acetyl-alpha-D-glucosamine = di-trans,octa-cis-undecaprenyl diphospho-[N-acetyl-alpha-D-glucosaminyl-(1-&gt;4)]-N-acetyl-alpha-D-muramoyl-L-alanyl-D-glutamyl-meso-2,6-diaminopimeloyl-D-alanyl-D-alanine + UDP + H(+). It participates in cell wall biogenesis; peptidoglycan biosynthesis. Functionally, cell wall formation. Catalyzes the transfer of a GlcNAc subunit on undecaprenyl-pyrophosphoryl-MurNAc-pentapeptide (lipid intermediate I) to form undecaprenyl-pyrophosphoryl-MurNAc-(pentapeptide)GlcNAc (lipid intermediate II). This is UDP-N-acetylglucosamine--N-acetylmuramyl-(pentapeptide) pyrophosphoryl-undecaprenol N-acetylglucosamine transferase from Microcystis aeruginosa (strain NIES-843 / IAM M-2473).